The following is a 283-amino-acid chain: Aldo-keto reductase MSMEG_2407/MSMEI_2346 (283 aa).

The active-site Proton donor is the Y58. Positions 196, 198, 200, 236, 238, 239, 240, 244, 247, 248, and 274 each coordinate NADPH.

This sequence belongs to the aldo/keto reductase family. As to quaternary structure, monomer.

With respect to regulation, inhibited by the antituberculosis drug isoniazid (INH). Catalyzes the NADPH-dependent reduction of dicarbonyls. Exhibits narrow substrate specificity, with preferential activity against the dicarbonyl substrates phenylglyoxal and methylglyoxal. Exhibits weak activity with ethyl-2-methyl acetoacetate. Cannot use NADH. May play an important role in the detoxification of methylglyoxal. The polypeptide is Aldo-keto reductase MSMEG_2407/MSMEI_2346 (Mycolicibacterium smegmatis (strain ATCC 700084 / mc(2)155) (Mycobacterium smegmatis)).